We begin with the raw amino-acid sequence, 1297 residues long: Protein Atossa (1297 aa).

2 disordered regions span residues Met1–Ala22 and Thr117–Arg149. Over residues Gly133 to Ser144 the composition is skewed to low complexity. The tract at residues Val174–Asn182 is transactivation domain 1 (TAD1). Disordered regions lie at residues Ser206–Asp227, Thr287–Pro311, Gly518–Ser655, Ser704–Asp741, and Ala1017–Ser1048. Composition is skewed to low complexity over residues Asn213–Ser226 and Thr287–Ser305. Positions Ser564 to Asp578 are enriched in polar residues. Over residues Gln605–Arg620 the composition is skewed to basic residues. 2 stretches are compositionally biased toward low complexity: residues Ser643–Ser655 and Gly706–Thr716. The segment covering Asp717 to Glu731 has biased composition (acidic residues). The segment at Leu1074–Leu1132 is required for macropage invasion. The transactivation domain 2 (TAD2) stretch occupies residues Val1150–Ile1158. Residues Ser1192–Lys1213 are disordered. A compositionally biased stretch (low complexity) spans Arg1203 to Ser1212.

The protein belongs to the ATOS family. In terms of tissue distribution, expressed in macrophages.

It localises to the nucleus. Functionally, transcription regulator that synchronizes transcriptional and translational programs to promote macrophage invasion of tissues. Required in macrophages for their early invasion into the extended germband. Induces transcriptional expression of metabolic enzymes as well as of the translational regulator pths/DDX47. With pths/DDX47, adjusts transcription and translation of a subset of OXPHOS genes to increase mitochondrial bioenergetics and allow macrophage tissue invasion. In Drosophila melanogaster (Fruit fly), this protein is Protein Atossa.